Reading from the N-terminus, the 64-residue chain is uncharacterized protein (64 aa).

A helical transmembrane segment spans residues 30-52 (FYAIFEMLFWPLVSLISVGLLGE).

The protein localises to the membrane. This is an uncharacterized protein from Archaeoglobus fulgidus (strain ATCC 49558 / DSM 4304 / JCM 9628 / NBRC 100126 / VC-16).